Consider the following 156-residue polypeptide: Small ribosomal subunit protein uS7 (156 aa).

This sequence belongs to the universal ribosomal protein uS7 family. In terms of assembly, part of the 30S ribosomal subunit. Contacts proteins S9 and S11.

One of the primary rRNA binding proteins, it binds directly to 16S rRNA where it nucleates assembly of the head domain of the 30S subunit. Is located at the subunit interface close to the decoding center, probably blocks exit of the E-site tRNA. This is Small ribosomal subunit protein uS7 from Clostridium beijerinckii (strain ATCC 51743 / NCIMB 8052) (Clostridium acetobutylicum).